Reading from the N-terminus, the 676-residue chain is Probable metal-nicotianamine transporter YSL6 (676 aa).

13 consecutive transmembrane segments (helical) span residues 38-58 (ITIR…IITH), 62-82 (LTVG…FFFV), 110-130 (CVVA…LIAM), 154-174 (GLWW…FSLV), 276-296 (IVNC…WPFV), 321-341 (VFIA…KIIA), 392-412 (FAIA…PIIF), 413-433 (PPLK…LAFC), 452-472 (IGLF…AGLA), 510-530 (VGTA…WTAF), 561-581 (LPKH…IVNL), 604-624 (FYIG…LFVW), and 639-659 (VASG…ILSI).

This sequence belongs to the YSL (TC 2.A.67.2) family.

The protein resides in the membrane. Its function is as follows. May be involved in the transport of nicotianamine-chelated metals. The sequence is that of Probable metal-nicotianamine transporter YSL6 (YSL6) from Arabidopsis thaliana (Mouse-ear cress).